The sequence spans 159 residues: E3 ubiquitin ligase complex SCF subunit sconC (159 aa).

Residues 101–159 (ILAANYLDIKALLDVGCKTVANMIKGKSPEEIRKTFNIQNDFTPEEEDQIRRENEWAEE) are interaction with the F-box domain of F-box proteins.

It belongs to the SKP1 family. As to quaternary structure, component of the SCF (SKP1-CUL1-F-box protein) E3 ubiquitin ligase complexes.

Its pathway is protein modification; protein ubiquitination. Functionally, essential component of the SCF (SKP1-CUL1-F-box protein) E3 ubiquitin ligase complexes, which mediate the ubiquitination and subsequent proteasomal degradation of target proteins. Controls sulfur metabolite repression, probably by mediating the inactivation or degradation of the metR transcription factor. This is E3 ubiquitin ligase complex SCF subunit sconC (sconC) from Aspergillus clavatus (strain ATCC 1007 / CBS 513.65 / DSM 816 / NCTC 3887 / NRRL 1 / QM 1276 / 107).